The chain runs to 345 residues: uncharacterized protein (345 aa).

The tract at residues 1–98 (MNDEMKGKSG…ISGKSFIDPE (98 aa)) is disordered. 3 stretches are compositionally biased toward basic and acidic residues: residues 18 to 27 (RSDDDSDKRT), 42 to 68 (SRAD…EDSP), and 76 to 86 (PGDETPEKADH).

It belongs to the class IV-like SAM-binding methyltransferase superfamily. RNA methyltransferase TrmH family.

This is an uncharacterized protein from Escherichia coli O157:H7.